Reading from the N-terminus, the 167-residue chain is Methyl-coenzyme M reductase II operon protein D (167 aa).

In terms of assembly, MCR is composed of three subunits: alpha, beta, and gamma. The function of protein D is not known.

In Methanocaldococcus jannaschii (strain ATCC 43067 / DSM 2661 / JAL-1 / JCM 10045 / NBRC 100440) (Methanococcus jannaschii), this protein is Methyl-coenzyme M reductase II operon protein D (mrtD).